Consider the following 453-residue polypeptide: MAAVVLENGVLSRKLSDFGQETSYIEDNSNQNGAISLIFSLKEEVGALAKVLRLFEENDINLTHIESRPSRLNKDEYEFFTYLDKRTKPVLGSIIKSLRNDIGATVHELSRDKEKNTVPWFPRTIQELDRFANQILSYGAELDADHPGFKDPVYRARRKQFADIAYNYRHGQPIPRVEYTEEEKQTWGTVFRTLKALYKTHACYEHNHIFPLLEKYCGFREDNIPQLEDVSQFLQTCTGFRLRPVAGLLSSRDFLGGLAFRVFHCTQYIRHGSKPMYTPEPDICHELLGHVPLFSDRSFAQFSQEIGLASLGAPDEYIEKLATIYWFTVEFGLCKEGDSIKAYGAGLLSSFGELQYCLSDKPKLLPLELEKTACQEYSVTEFQPLYYVAESFSDAKEKVRTFAATIPRPFSVRYDPYTQRVEVLDNTQQLKILADSINSEVGILCNALQKIKS.

Residue Ala2 is modified to N-acetylalanine. A Phosphoserine; by PKA modification is found at Ser16. An ACT domain is found at 36-114; it reads SLIFSLKEEV…TVHELSRDKE (79 aa). Fe cation-binding residues include His285, His290, and Glu330.

This sequence belongs to the biopterin-dependent aromatic amino acid hydroxylase family. As to quaternary structure, homodimer and homotetramer. Requires Fe(2+) as cofactor. Post-translationally, phosphorylation at Ser-16 increases basal activity and facilitates activation by the substrate phenylalanine.

The catalysed reaction is (6R)-L-erythro-5,6,7,8-tetrahydrobiopterin + L-phenylalanine + O2 = (4aS,6R)-4a-hydroxy-L-erythro-5,6,7,8-tetrahydrobiopterin + L-tyrosine. It participates in amino-acid degradation; L-phenylalanine degradation; acetoacetate and fumarate from L-phenylalanine: step 1/6. N-terminal region of PAH is thought to contain allosteric binding sites for phenylalanine and to constitute an 'inhibitory' domain that regulates the activity of a catalytic domain in the C-terminal portion of the molecule. In terms of biological role, catalyzes the hydroxylation of L-phenylalanine to L-tyrosine. This is Phenylalanine-4-hydroxylase (Pah) from Rattus norvegicus (Rat).